Reading from the N-terminus, the 77-residue chain is Small ribosomal subunit protein bS21 (77 aa).

Positions 38-52 are enriched in basic and acidic residues; the sequence is KPSEKRAREKAEAIR. The disordered stretch occupies residues 38 to 77; that stretch reads KPSEKRAREKAEAIRRTRKLARKRAQREGIVSNGRTASVR. Residues 53–62 are compositionally biased toward basic residues; the sequence is RTRKLARKRA.

It belongs to the bacterial ribosomal protein bS21 family.

In Bartonella bacilliformis (strain ATCC 35685 / KC583 / Herrer 020/F12,63), this protein is Small ribosomal subunit protein bS21.